The following is a 142-amino-acid chain: Metallothiol transferase FosB (142 aa).

The region spanning 5 to 120 is the VOC domain; sequence SVNHICFSVS…DGHKIELHTG (116 aa). Mg(2+) contacts are provided by His8, His67, and Glu116. Glu116 acts as the Proton donor/acceptor in catalysis.

Belongs to the fosfomycin resistance protein family. FosB subfamily. As to quaternary structure, homodimer. The cofactor is Mg(2+).

The protein localises to the cytoplasm. In terms of biological role, metallothiol transferase which confers resistance to fosfomycin by catalyzing the addition of a thiol cofactor to fosfomycin. L-cysteine is probably the physiological thiol donor. This chain is Metallothiol transferase FosB, found in Staphylococcus epidermidis (strain ATCC 12228 / FDA PCI 1200).